Here is an 880-residue protein sequence, read N- to C-terminus: Translation initiation factor IF-2 (880 aa).

Composition is skewed to basic and acidic residues over residues 34 to 43 (HMSSLDDKQV), 59 to 69 (TEKDSKNSSRK), 82 to 94 (RRRD…DNRH), 110 to 131 (NRRE…DLLN), 167 to 181 (KKVE…EKLE), 230 to 240 (QKEETKPTRKK), and 248 to 261 (EVPD…EHSD). The tract at residues 34-297 (HMSSLDDKQV…KERPLPETLV (264 aa)) is disordered. A compositionally biased stretch (basic residues) spans 262 to 275 (KARRRRNKKNKRIN). A compositionally biased stretch (basic and acidic residues) spans 276-292 (QSKEVKKQPTQRKERPL). The tr-type G domain maps to 381-550 (KRPPVVTIMG…LLQADVMELK (170 aa)). The G1 stretch occupies residues 390-397 (GHVDHGKT). 390–397 (GHVDHGKT) serves as a coordination point for GTP. A G2 region spans residues 415–419 (GITQR). The tract at residues 436 to 439 (DTPG) is G3. Residues 436 to 440 (DTPGH) and 490 to 493 (NKID) each bind GTP. Residues 490-493 (NKID) are G4. The G5 stretch occupies residues 526–528 (SAK).

This sequence belongs to the TRAFAC class translation factor GTPase superfamily. Classic translation factor GTPase family. IF-2 subfamily.

It is found in the cytoplasm. In terms of biological role, one of the essential components for the initiation of protein synthesis. Protects formylmethionyl-tRNA from spontaneous hydrolysis and promotes its binding to the 30S ribosomal subunits. Also involved in the hydrolysis of GTP during the formation of the 70S ribosomal complex. The sequence is that of Translation initiation factor IF-2 from Lactobacillus johnsonii (strain CNCM I-12250 / La1 / NCC 533).